The sequence spans 1367 residues: Collagen alpha-1(XV) chain (1367 aa).

The first 31 residues, 1–31, serve as a signal peptide directing secretion; the sequence is MTHRRTAQGRRPRWLLSIISALLSAVLQTRA. The region spanning 54–249 is the Laminin G-like domain; the sequence is SVSFTTGYGG…SSASGEASGF (196 aa). The tract at residues 229–604 is nonhelical region 1 (NC1); it reads RTPEELCEAQ…DIVGNEDLLR (376 aa). O-linked (Xyl...) (chondroitin sulfate) serine glycosylation is found at serine 243 and serine 247. Residues 267 to 319 are disordered; sequence APPKESHVDPISVPPTSSSPAEDSELSGEPVPEGTPETNLSIIGHSSPEQGSG. N-linked (GlcNAc...) asparagine glycosylation is found at asparagine 305 and asparagine 323. Serine 341 carries an O-linked (Xyl...) (chondroitin sulfate) serine glycan. 3 N-linked (GlcNAc...) asparagine glycosylation sites follow: asparagine 348, asparagine 375, and asparagine 402. 2 disordered regions span residues 396-446 and 529-784; these read DTPD…SHGE and TAEP…GHVE. Positions 402–429 are enriched in polar residues; it reads NLTTTASGDGEVPTSTDGDTEADSSPTG. Residues 434-446 are compositionally biased toward basic and acidic residues; sequence KPREEATLGSHGE. Pro residues predominate over residues 555-564; the sequence is PSGPPLPTPT. The segment covering 582-595 has biased composition (gly residues); that stretch reads GPVGGLDEGSGSGD. Collagen-like domains are found at residues 605–665 and 666–717; these read GPPG…GMKG and EKGA…PPGP. The segment at 605 to 718 is triple-helical region 1 (COL1); sequence GPPGPPGPPG…PGPPGPPGPG (114 aa). Over residues 606–616 the composition is skewed to pro residues; the sequence is PPGPPGPPGSP. A glycan (N-linked (GlcNAc...) asparagine) is linked at asparagine 673. Positions 703–717 are enriched in pro residues; it reads MGPPGPPGPPGPPGP. Residues 719 to 748 form a nonhelical region 2 (NC2) region; that stretch reads CTTELGFEIEGSGDVRLLSKPTISGPTSPS. A glycan (O-linked (Xyl...) (chondroitin sulfate) serine) is linked at serine 730. Over residues 737–750 the composition is skewed to low complexity; it reads SKPTISGPTSPSGP. The tract at residues 749–783 is triple-helical region 2 (COL2); it reads GPKGEKGEQGAKGERGADGTSTMGPPGPRGPPGHV. A compositionally biased stretch (basic and acidic residues) spans 751–765; it reads KGEKGEQGAKGERGA. A nonhelical region 3 (NC3) region spans residues 784–807; the sequence is EVLSSSLINITNGSMNFSDIPELM. Asparagine 792, asparagine 795, and asparagine 799 each carry an N-linked (GlcNAc...) asparagine glycan. 2 consecutive Collagen-like domains span residues 808 to 850 and 863 to 912; these read GPPG…GEPG and KGRK…GDRG. Residues 808–852 form a triple-helical region 3 (COL3) region; sequence GPPGPDGVPGLPGFPGPRGPKGDTGVPGFPGLKGEQGEKGEPGAI. The tract at residues 853–863 is nonhelical region 4 (NC4); that stretch reads LTGDVPLEMMK. Residues 864–934 form a triple-helical region 4 (COL4) region; it reads GRKGEPGIHG…PGPPGPPGAV (71 aa). Residues 905–930 form a disordered region; sequence KGAKGDRGVTLPGPPGLPGPPGPPGP. The segment covering 916–930 has biased composition (pro residues); that stretch reads PGPPGLPGPPGPPGP. Residues 935–968 are nonhelical region 5 (NC5); the sequence is VNIKGAVFPIPARPHCKTPVGTAHPGDPELVTFH. The triple-helical region 5 (COL5) stretch occupies residues 969-998; it reads GVKGEKGSWGLPGSKGEKGDQGAQGPPGPP. Disordered stretches follow at residues 974-1000 and 1055-1089; these read KGSW…PPVD and GPPG…PAIL. Residues 999–1031 are nonhelical region 6 (NC6); sequence VDPAYLRHFLNSLKGENEDASFRGESSNNLFVS. The segment at 1032–1086 is triple-helical region 6 (COL6); that stretch reads GPPGLPGYPGLVGQKGEAVVGPQGPPGIPGLPGPPGFGRPGVPGPPGPPGPPGPP. Positions 1055–1086 are enriched in pro residues; the sequence is GPPGIPGLPGPPGFGRPGVPGPPGPPGPPGPP. A nonhelical region 7 (NC7) region spans residues 1087-1096; sequence AILGAAVALP. The tract at residues 1097–1111 is triple-helical region 7 (COL7); the sequence is GPPGPPGQPGLPGSR. The segment at 1112–1367 is nonhelical region 8 (NC8); the sequence is NLVTALSDMG…ENSFMTDTRK (256 aa). 2 disulfides stabilise this stretch: cysteine 1216/cysteine 1356 and cysteine 1318/cysteine 1348.

Belongs to the multiplexin collagen family. Trimer; disulfide-linked. As to quaternary structure, interacts moderately with EFEMP2. Prolines at the third position of the tripeptide repeating unit (G-X-Y) are hydroxylated in some or all of the chains. Post-translationally, O-glycosylated; contains chondroitin sulfate. As to expression, detected in testis, brain, heart, kidney, skeletal muscle and skin (at protein level). Detected in heart and skeletal muscle.

The protein localises to the secreted. It localises to the extracellular space. Its subcellular location is the extracellular matrix. Its function is as follows. Structural protein that stabilizes microvessels and muscle cells, both in heart and in skeletal muscle. Functionally, restin potently inhibits angiogenesis. This Mus musculus (Mouse) protein is Collagen alpha-1(XV) chain (Col15a1).